The following is a 453-amino-acid chain: Sialic acid-binding Ig-like lectin 6 (453 aa).

A signal peptide spans 1–26 (MQGAQEASASEMLPLLLPLLWAGALA). The Extracellular portion of the chain corresponds to 27–347 (QERRFQLEGP…WKPEGRAGGV (321 aa)). The Ig-like V-type domain occupies 28–123 (ERRFQLEGPE…RDNAAYFFRL (96 aa)). Intrachain disulfides connect cysteine 46–cysteine 172, cysteine 51–cysteine 104, and cysteine 166–cysteine 215. Asparagine 103 is a glycosylation site (N-linked (GlcNAc...) asparagine). Arginine 122 is a binding site for N-acetylneuraminate. An Ig-like C2-type 1 domain is found at 148 to 231 (PNISIPGTLE…AGVTMERTIQ (84 aa)). Asparagine 149 and asparagine 163 each carry an N-linked (GlcNAc...) asparagine glycan. N-linked (GlcNAc...) asparagine glycosylation is present at asparagine 233. The 96-residue stretch at 238 to 333 (PQKVAISIFQ…PLGSLQISLS (96 aa)) folds into the Ig-like C2-type 2 domain. A disulfide bond links cysteine 274 and cysteine 319. Residues 348-368 (LGAVWGASITTLVFLCVCFIF) form a helical membrane-spanning segment. Topologically, residues 369-453 (RVKTRRKKAA…TEYSEIKIHK (85 aa)) are cytoplasmic. The short motif at 424 to 429 (LHYAVL) is the ITIM motif element. The SLAM-like motif signature appears at 444–449 (TEYSEI).

Belongs to the immunoglobulin superfamily. SIGLEC (sialic acid binding Ig-like lectin) family. In terms of assembly, interacts with LEP. In terms of tissue distribution, expressed at high levels in placenta (cyto- and syncytiotrophoblastic cells) and at lower levels in spleen, peripheral blood leukocytes (predominantly B-cells) and small intestine.

The protein resides in the cell membrane. The protein localises to the secreted. In terms of biological role, putative adhesion molecule that mediates sialic-acid dependent binding to cells. Binds to alpha-2,6-linked sialic acid. The sialic acid recognition site may be masked by cis interactions with sialic acids on the same cell surface. This chain is Sialic acid-binding Ig-like lectin 6 (SIGLEC6), found in Homo sapiens (Human).